The following is a 414-amino-acid chain: L-cysteine:1D-myo-inositol 2-amino-2-deoxy-alpha-D-glucopyranoside ligase (414 aa).

C44 contributes to the Zn(2+) binding site. Residues 44–47 (CGIT), T59, and 82–84 (NIT) contribute to the L-cysteinyl-5'-AMP site. The short motif at 46–56 (ITPYDSTHLGH) is the 'HIGH' region element. A 'ERGGDP' region motif is present at residues 188–193 (ERGGDP). Residue W228 participates in L-cysteinyl-5'-AMP binding. Position 232 (C232) interacts with Zn(2+). Residue 250 to 252 (GSD) coordinates L-cysteinyl-5'-AMP. Residue H257 coordinates Zn(2+). I284 contributes to the L-cysteinyl-5'-AMP binding site. Positions 290-294 (KMSKS) match the 'KMSKS' region motif.

This sequence belongs to the class-I aminoacyl-tRNA synthetase family. MshC subfamily. Monomer. Requires Zn(2+) as cofactor.

The enzyme catalyses 1D-myo-inositol 2-amino-2-deoxy-alpha-D-glucopyranoside + L-cysteine + ATP = 1D-myo-inositol 2-(L-cysteinylamino)-2-deoxy-alpha-D-glucopyranoside + AMP + diphosphate + H(+). Its function is as follows. Catalyzes the ATP-dependent condensation of GlcN-Ins and L-cysteine to form L-Cys-GlcN-Ins. This Corynebacterium aurimucosum (strain ATCC 700975 / DSM 44827 / CIP 107346 / CN-1) (Corynebacterium nigricans) protein is L-cysteine:1D-myo-inositol 2-amino-2-deoxy-alpha-D-glucopyranoside ligase.